The following is a 1208-amino-acid chain: Urease accessory protein 2 (1208 aa).

2 coiled-coil regions span residues 187-362 (RDKI…EKAA) and 400-469 (IKAL…MHEQ). In terms of domain architecture, SMC hinge spans 523-633 (DGVFGPLYDL…ICEDLQTAAH (111 aa)). Coiled coils occupy residues 688 to 771 (HIEV…YEEE) and 817 to 903 (NRLE…VQTQ). The disordered stretch occupies residues 748-773 (ESSLEEAEGASRDAKAKRASYEEELR). The segment covering 756–773 (GASRDAKAKRASYEEELR) has biased composition (basic and acidic residues).

It belongs to the SMC family. SMC3 subfamily. In terms of assembly, component of cohesin complexes.

It is found in the nucleus. In terms of biological role, central component of cohesin, a complex required for chromosome cohesion during the cell cycle. The cohesin complex may form a large proteinaceous ring within which sister chromatids can be trapped. At anaphase, the complex is cleaved and dissociates from chromatin, allowing sister chromatids to segregate. Cohesion is coupled to DNA replication and is involved in DNA repair. The cohesin complex also plays an important role in spindle pole assembly during mitosis and in chromosomes movement. Is unrelated to urease function in C.neoformans. This is Urease accessory protein 2 from Cryptococcus neoformans var. grubii serotype A (strain H99 / ATCC 208821 / CBS 10515 / FGSC 9487) (Filobasidiella neoformans var. grubii).